The primary structure comprises 295 residues: Acetylglutamate kinase (295 aa).

Substrate-binding positions include 66–67, R88, and N193; that span reads GG.

Belongs to the acetylglutamate kinase family. ArgB subfamily.

It localises to the cytoplasm. It catalyses the reaction N-acetyl-L-glutamate + ATP = N-acetyl-L-glutamyl 5-phosphate + ADP. It functions in the pathway amino-acid biosynthesis; L-arginine biosynthesis; N(2)-acetyl-L-ornithine from L-glutamate: step 2/4. Functionally, catalyzes the ATP-dependent phosphorylation of N-acetyl-L-glutamate. In Rhizobium leguminosarum bv. trifolii (strain WSM2304), this protein is Acetylglutamate kinase.